Consider the following 458-residue polypeptide: Bifunctional protein GlmU (458 aa).

The tract at residues 1 to 232 (MTSSLSVIIL…TFEIEGVNNR (232 aa)) is pyrophosphorylase. UDP-N-acetyl-alpha-D-glucosamine-binding positions include 10-13 (LAAG), K24, Q79, 84-85 (GT), 106-108 (YGD), G142, E157, N172, and N230. Residue D108 participates in Mg(2+) binding. Position 230 (N230) interacts with Mg(2+). The linker stretch occupies residues 233 to 253 (QQLASLERTWQGKLVADLQEA). Residues 254–458 (GVQFADPTRV…KNDFKRPTKK (205 aa)) are N-acetyltransferase. 2 residues coordinate UDP-N-acetyl-alpha-D-glucosamine: R336 and K354. The Proton acceptor role is filled by H366. Positions 369 and 380 each coordinate UDP-N-acetyl-alpha-D-glucosamine. Acetyl-CoA contacts are provided by residues A383, 389–390 (NY), S408, A426, and R443.

This sequence in the N-terminal section; belongs to the N-acetylglucosamine-1-phosphate uridyltransferase family. It in the C-terminal section; belongs to the transferase hexapeptide repeat family. In terms of assembly, homotrimer. Mg(2+) is required as a cofactor.

The protein resides in the cytoplasm. The catalysed reaction is alpha-D-glucosamine 1-phosphate + acetyl-CoA = N-acetyl-alpha-D-glucosamine 1-phosphate + CoA + H(+). It carries out the reaction N-acetyl-alpha-D-glucosamine 1-phosphate + UTP + H(+) = UDP-N-acetyl-alpha-D-glucosamine + diphosphate. The protein operates within nucleotide-sugar biosynthesis; UDP-N-acetyl-alpha-D-glucosamine biosynthesis; N-acetyl-alpha-D-glucosamine 1-phosphate from alpha-D-glucosamine 6-phosphate (route II): step 2/2. It participates in nucleotide-sugar biosynthesis; UDP-N-acetyl-alpha-D-glucosamine biosynthesis; UDP-N-acetyl-alpha-D-glucosamine from N-acetyl-alpha-D-glucosamine 1-phosphate: step 1/1. Its pathway is bacterial outer membrane biogenesis; LPS lipid A biosynthesis. Its function is as follows. Catalyzes the last two sequential reactions in the de novo biosynthetic pathway for UDP-N-acetylglucosamine (UDP-GlcNAc). The C-terminal domain catalyzes the transfer of acetyl group from acetyl coenzyme A to glucosamine-1-phosphate (GlcN-1-P) to produce N-acetylglucosamine-1-phosphate (GlcNAc-1-P), which is converted into UDP-GlcNAc by the transfer of uridine 5-monophosphate (from uridine 5-triphosphate), a reaction catalyzed by the N-terminal domain. The polypeptide is Bifunctional protein GlmU (Psychrobacter cryohalolentis (strain ATCC BAA-1226 / DSM 17306 / VKM B-2378 / K5)).